The sequence spans 739 residues: MEQTYEYAWIIPFIPLPVPMLIGAGLILFPTATKSFRRMWAFQSVLLLSIVMIFSIYLSIQQINSSSVYQYVWSWIINNDFSLDFGYLIDPLTSIMSILITTVGIMVLIYSDNYMAHDQGYLRFFAYMSFFSTSMLGLVTSSNLIQIYIFWELVGLCSYLLIGFWFTRPVAANACQKAFVTNRVGDFGLLLGILGFYWITGSFEFRDLFEIFNNLIYNNEVNFLFVTLCAVLLFAGAVAKSAQFPLHVWLPDAMEGPTPISALIHAATMVAAGIFLVARLLPLFRVIPYIMYLISVIGIITVLLGATLALAQKDIKRGLAYSTMSQLGYMMLALGMGSYRSALFHLITHAYSKALLFLGSGSIIHSMETIVGYSPAKSQNMGLMGGLRKHVPITKITFLLGTLSLCGIPPLACFWSKDEILNDSWLYSPIFAIIAWATAGLTAFYMFRIYLLTFEGHLNVHFQNYDGKHKTPFYSISLWGKNGVKKNSCLLTMNNNESTYFLSKTKYPIDKNGRKMTRPFMTIAHFEHKAVSSYPYESDNTMLFPIFVLGLFTLFVGAIGIPFNQEGVNLDILSKWLAPSINLLHPKSNNSQDWNEFLKDAVVSVSIAYFGIFIASFLYKPIYSSLKNLEFINSFVKKGPKRILWDKILNGIYDWSYNRAYIDAFYTRFFVGGIRGLAEFTHFFDRRVIDGMTNGVGVISFIVGEGIKYIGGGRISSYLFLYLAYVSVFLLVYYLLFST.

16 consecutive transmembrane segments (helical) span residues 9–29 (WIIPFIPLPVPMLIGAGLILF), 40–60 (WAFQSVLLLSIVMIFSIYLSI), 89–109 (IDPLTSIMSILITTVGIMVLI), 125–145 (FAYMSFFSTSMLGLVTSSNLI), 147–167 (IYIFWELVGLCSYLLIGFWFT), 185–205 (GDFGLLLGILGFYWITGSFEF), 219–239 (NEVNFLFVTLCAVLLFAGAVA), 258–278 (TPISALIHAATMVAAGIFLVA), 286–306 (VIPYIMYLISVIGIITVLLGA), 327–347 (LGYMMLALGMGSYRSALFHLI), 354–374 (ALLFLGSGSIIHSMETIVGYS), 396–416 (ITFLLGTLSLCGIPPLACFWS), 425–445 (WLYSPIFAIIAWATAGLTAFY), 543–563 (LFPIFVLGLFTLFVGAIGIPF), 602–622 (VVSVSIAYFGIFIASFLYKPI), and 717–737 (SYLFLYLAYVSVFLLVYYLLF).

It belongs to the complex I subunit 5 family. NDH is composed of at least 16 different subunits, 5 of which are encoded in the nucleus.

It localises to the plastid. The protein resides in the chloroplast thylakoid membrane. It carries out the reaction a plastoquinone + NADH + (n+1) H(+)(in) = a plastoquinol + NAD(+) + n H(+)(out). The catalysed reaction is a plastoquinone + NADPH + (n+1) H(+)(in) = a plastoquinol + NADP(+) + n H(+)(out). Functionally, NDH shuttles electrons from NAD(P)H:plastoquinone, via FMN and iron-sulfur (Fe-S) centers, to quinones in the photosynthetic chain and possibly in a chloroplast respiratory chain. The immediate electron acceptor for the enzyme in this species is believed to be plastoquinone. Couples the redox reaction to proton translocation, and thus conserves the redox energy in a proton gradient. The protein is NAD(P)H-quinone oxidoreductase subunit 5, chloroplastic (ndhF) of Solanum tuberosum (Potato).